A 407-amino-acid polypeptide reads, in one-letter code: 4-hydroxybenzoate polyprenyltransferase, mitochondrial (407 aa).

Residues 1–20 (MAFFGLSRVSRRLLKSSVSV) constitute a mitochondrion transit peptide. Transmembrane regions (helical) follow at residues 137 to 157 (IGTW…ADPG), 162 to 182 (FKYM…GCTI), 210 to 230 (FQGI…LLQL), 254 to 274 (FTFW…LLGW), 279 to 299 (GSIA…WTLV), and 330 to 350 (LWLT…GFSA).

This sequence belongs to the UbiA prenyltransferase family. Mg(2+) is required as a cofactor. As to expression, expressed in flowers.

It is found in the mitochondrion inner membrane. It carries out the reaction an all-trans-polyprenyl diphosphate + 4-hydroxybenzoate = a 4-hydroxy-3-(all-trans-polyprenyl)benzoate + diphosphate. It functions in the pathway cofactor biosynthesis; ubiquinone biosynthesis. Its function is as follows. Catalyzes the prenylation of para-hydroxybenzoate (PHB) with an all-trans polyprenyl group. Mediates the second step in the final reaction sequence of coenzyme Q (CoQ) biosynthesis, which is the condensation of the polyisoprenoid side chain with PHB, generating the first membrane-bound Q intermediate. Required for embryo development. The chain is 4-hydroxybenzoate polyprenyltransferase, mitochondrial from Arabidopsis thaliana (Mouse-ear cress).